A 268-amino-acid chain; its full sequence is 4-diphosphocytidyl-2-C-methyl-D-erythritol kinase (268 aa).

Residue K9 is part of the active site. 88-98 (PPGAGLGGGSS) provides a ligand contact to ATP. Residue D130 is part of the active site.

It belongs to the GHMP kinase family. IspE subfamily.

It carries out the reaction 4-CDP-2-C-methyl-D-erythritol + ATP = 4-CDP-2-C-methyl-D-erythritol 2-phosphate + ADP + H(+). The protein operates within isoprenoid biosynthesis; isopentenyl diphosphate biosynthesis via DXP pathway; isopentenyl diphosphate from 1-deoxy-D-xylulose 5-phosphate: step 3/6. In terms of biological role, catalyzes the phosphorylation of the position 2 hydroxy group of 4-diphosphocytidyl-2C-methyl-D-erythritol. The protein is 4-diphosphocytidyl-2-C-methyl-D-erythritol kinase of Aquifex aeolicus (strain VF5).